Here is a 265-residue protein sequence, read N- to C-terminus: Phosphonates import ATP-binding protein PhnC (265 aa).

The region spanning 3 to 247 (LRLKQAFLHH…MLDTLYANEQ (245 aa)) is the ABC transporter domain. ATP is bound at residue 36–43 (GPSGAGKS).

The protein belongs to the ABC transporter superfamily. Phosphonates importer (TC 3.A.1.9.1) family. In terms of assembly, the complex is composed of two ATP-binding proteins (PhnC), two transmembrane proteins (PhnE) and a solute-binding protein (PhnD).

The protein resides in the cell inner membrane. It catalyses the reaction phosphonate(out) + ATP + H2O = phosphonate(in) + ADP + phosphate + H(+). Part of the ABC transporter complex PhnCDE involved in phosphonates import. Responsible for energy coupling to the transport system. The protein is Phosphonates import ATP-binding protein PhnC of Pseudomonas fluorescens (strain Pf0-1).